The primary structure comprises 282 residues: uncharacterized protein (282 aa).

An HTH rpiR-type domain is found at 2 to 78; the sequence is TDVLAVIREM…IKIAVSLAKQ (77 aa). The H-T-H motif DNA-binding region spans 38–57; that stretch reads VNELANACDTSEASIIRFCR. Positions 122–262 constitute an SIS domain; sequence AAEALANANK…FILVAQKKYN (141 aa).

This is an uncharacterized protein from Caldanaerobacter subterraneus subsp. tengcongensis (strain DSM 15242 / JCM 11007 / NBRC 100824 / MB4) (Thermoanaerobacter tengcongensis).